The following is a 473-amino-acid chain: Bifunctional protein HldE (473 aa).

A ribokinase region spans residues 1–316 (MILPDFSLAR…AIAIHGQRAP (316 aa)). Residue 193–196 (NLSE) coordinates ATP. Aspartate 262 is an active-site residue. Residues 342–473 (VTNGCFDLLH…TRIIEAIRNG (132 aa)) are cytidylyltransferase.

It in the N-terminal section; belongs to the carbohydrate kinase PfkB family. The protein in the C-terminal section; belongs to the cytidylyltransferase family. As to quaternary structure, homodimer.

It catalyses the reaction D-glycero-beta-D-manno-heptose 7-phosphate + ATP = D-glycero-beta-D-manno-heptose 1,7-bisphosphate + ADP + H(+). The catalysed reaction is D-glycero-beta-D-manno-heptose 1-phosphate + ATP + H(+) = ADP-D-glycero-beta-D-manno-heptose + diphosphate. It participates in nucleotide-sugar biosynthesis; ADP-L-glycero-beta-D-manno-heptose biosynthesis; ADP-L-glycero-beta-D-manno-heptose from D-glycero-beta-D-manno-heptose 7-phosphate: step 1/4. The protein operates within nucleotide-sugar biosynthesis; ADP-L-glycero-beta-D-manno-heptose biosynthesis; ADP-L-glycero-beta-D-manno-heptose from D-glycero-beta-D-manno-heptose 7-phosphate: step 3/4. Its function is as follows. Catalyzes the phosphorylation of D-glycero-D-manno-heptose 7-phosphate at the C-1 position to selectively form D-glycero-beta-D-manno-heptose-1,7-bisphosphate. Functionally, catalyzes the ADP transfer from ATP to D-glycero-beta-D-manno-heptose 1-phosphate, yielding ADP-D-glycero-beta-D-manno-heptose. This Methylococcus capsulatus (strain ATCC 33009 / NCIMB 11132 / Bath) protein is Bifunctional protein HldE.